Here is a 464-residue protein sequence, read N- to C-terminus: Sensor histidine kinase Hik34 (464 aa).

The region spanning 235-449 is the Histidine kinase domain; the sequence is ALTHEVRTPL…ILTIYLKCEQ (215 aa). Phosphohistidine; by autocatalysis is present on His238.

Post-translationally, when expressed in E.coli autophosphorylates at 18 to 30 degrees Celsius; less phosphorylation occurs at 36 and none occurs at 42 or 48 degrees Celsius.

It carries out the reaction ATP + protein L-histidine = ADP + protein N-phospho-L-histidine.. Member of a two-component system Hik34/Rre1, controlling expression of at least 20 genes in response to hyperosmotic stress (0.5 M sorbitol) or salt (0.5 M NaCl). Represses expression of heat shock genes under normal growth conditions. Required for survival of long-term heat shock exposure. This Synechocystis sp. (strain ATCC 27184 / PCC 6803 / Kazusa) protein is Sensor histidine kinase Hik34.